The primary structure comprises 112 residues: uncharacterized protein (112 aa).

Its subcellular location is the plastid. The protein localises to the chloroplast. This is an uncharacterized protein from Chlamydomonas reinhardtii (Chlamydomonas smithii).